A 504-amino-acid chain; its full sequence is MRNWLVLLCPCVLGAALHLWHLWLRSPPDPHNTGPSAADQSALFPHWKFSHYDVVVGVLSARNNHELRNVIRNTWLKNLLHHPTLSQRVLVKFIIGARGCEVPVEDREDPYSCRLLNITNPVLNQEIEAFSFPEDASSSRLSEDRVVSVSFRVLYPIVITSLGVFYDASDVGFQRNITVKLYQTEQEEALFIARFSPPSCGVQVNKLWYKPVEQFILPESFEGTIVWESQDLHGLVSRNLHRVTVNDGGGVLRVLAAGEGALPHEFMEGVEGVAGGFIYTVQEGDALLRSLYSRPQRLADHIQDLQVEDALLQEESSVHDDIVFVDVVDTYRNVPAKLLNFYRWTVESTSFDLLLKTDDDCYIDLEAVFNRIAQKNLDGPNFWWGNFRLNWAVDRTGKWQELEYPSPAYPAFACGSGYVISKDIVDWLAGNSRRLKTYQGEDVSMGIWMAAIGPKRHQDSLWLCEKTCETGMLSSPQYSPEELSKLWELKELCGDPCQCEAKVR.

Topologically, residues 1 to 3 (MRN) are cytoplasmic. The chain crosses the membrane as a helical; Signal-anchor for type II membrane protein span at residues 4–24 (WLVLLCPCVLGAALHLWHLWL). Topologically, residues 25-504 (RSPPDPHNTG…DPCQCEAKVR (480 aa)) are lumenal. N-linked (GlcNAc...) asparagine glycans are attached at residues asparagine 117 and asparagine 176.

This sequence belongs to the glycosyltransferase 31 family. N-glycosylated. Present in testis (at protein level). In testis, it is mainly detected in the middle layers of seminiferous tubules at stages XII to II. Strongly expressed in primary and secondary spermatocytes and early round spermatids, but not in spermatogonia, elongating or elongated spermatids, or in Leydig or Sertoli cells.

It localises to the golgi apparatus membrane. Its subcellular location is the endoplasmic reticulum. It catalyses the reaction 3-O-(N-acetyl-beta-D-glucosaminyl-(1-&gt;4)-alpha-D-mannosyl)-L-threonyl-[protein] + UDP-N-acetyl-alpha-D-galactosamine = 3-O-[beta-D-GalNAc-(1-&gt;3)-beta-D-GlcNAc-(1-&gt;4)-alpha-D-Man]-L-Thr-[protein] + UDP + H(+). The protein operates within protein modification; protein glycosylation. Functionally, beta-1,3-N-acetylgalactosaminyltransferase that synthesizes a unique carbohydrate structure, GalNAc-beta-1-3GlcNAc, on N- and O-glycans. Has no galactose nor galactosaminyl transferase activity toward any acceptor substrate. Involved in alpha-dystroglycan (DAG1) glycosylation: acts coordinately with GTDC2/POMGnT2 to synthesize a GalNAc-beta3-GlcNAc-beta-terminus at the 4-position of protein O-mannose in the biosynthesis of the phosphorylated O-mannosyl trisaccharide (N-acetylgalactosamine-beta-3-N-acetylglucosamine-beta-4-(phosphate-6-)mannose), a carbohydrate structure present in alpha-dystroglycan, which is required for binding laminin G-like domain-containing extracellular proteins with high affinity. The protein is UDP-GalNAc:beta-1,3-N-acetylgalactosaminyltransferase 2 (B3galnt2) of Mus musculus (Mouse).